The sequence spans 213 residues: Orotate phosphoribosyltransferase (213 aa).

K26 is a 5-phospho-alpha-D-ribose 1-diphosphate binding site. Residue 34-35 participates in orotate binding; it reads FF. Residues 72–73, R98, K99, K102, H104, and 123–131 contribute to the 5-phospho-alpha-D-ribose 1-diphosphate site; these read YK and DDVISAGTS. Residues S127 and R155 each contribute to the orotate site.

It belongs to the purine/pyrimidine phosphoribosyltransferase family. PyrE subfamily. In terms of assembly, homodimer. Mg(2+) is required as a cofactor.

The catalysed reaction is orotidine 5'-phosphate + diphosphate = orotate + 5-phospho-alpha-D-ribose 1-diphosphate. It functions in the pathway pyrimidine metabolism; UMP biosynthesis via de novo pathway; UMP from orotate: step 1/2. Its function is as follows. Catalyzes the transfer of a ribosyl phosphate group from 5-phosphoribose 1-diphosphate to orotate, leading to the formation of orotidine monophosphate (OMP). The sequence is that of Orotate phosphoribosyltransferase from Laribacter hongkongensis (strain HLHK9).